We begin with the raw amino-acid sequence, 213 residues long: Kynurenine formamidase (213 aa).

Residue tryptophan 20 coordinates substrate. Zn(2+) contacts are provided by histidine 50, histidine 54, and aspartate 56. Histidine 60 functions as the Proton donor/acceptor in the catalytic mechanism. Histidine 161 and glutamate 173 together coordinate Zn(2+).

The protein belongs to the Cyclase 1 superfamily. KynB family. As to quaternary structure, homodimer. Zn(2+) is required as a cofactor.

It catalyses the reaction N-formyl-L-kynurenine + H2O = L-kynurenine + formate + H(+). It functions in the pathway amino-acid degradation; L-tryptophan degradation via kynurenine pathway; L-kynurenine from L-tryptophan: step 2/2. Catalyzes the hydrolysis of N-formyl-L-kynurenine to L-kynurenine, the second step in the kynurenine pathway of tryptophan degradation. The sequence is that of Kynurenine formamidase from Pseudomonas aeruginosa (strain ATCC 15692 / DSM 22644 / CIP 104116 / JCM 14847 / LMG 12228 / 1C / PRS 101 / PAO1).